Here is a 411-residue protein sequence, read N- to C-terminus: MSSVSQARSLGKYFLLMDNILVVMGFYMVFPLISIRFVDQLGWTALLVGIALGLRQFIQQGLGIFGGAFADKLGAKPMIITGMLMRALGFIFMGIADKPWLLWVSCILSALGGTLFDPPRTALVMKLTRPWERGRFYSLLMIQDSTCAMVGALLGSWLLQYNFKLVCLAGALLFLFAAILNAWLLPAYRISNAQTSMLEGIRRVLYDQRFVTYVFTLTGYYILSVQVMLILPIRVNEVAGQLAAVRWTYAIEAALSLSLLYPIARWSEKRFSLENRFMAGLTIMLLSIIPIGMIHNLQVLFLLIGIFYTGSIIAEPARETLGASLADNRARGSYMGFSRLGLALGGAIGYSGGGWLYDMGNQLDIPQLPWVMLGMIGLITLLGFYRQFHQHHYQTYSXYLSGTTKNNSYKQ.

Transmembrane regions (helical) follow at residues 13 to 33 (YFLLMDNILVVMGFYMVFPLI), 45 to 65 (ALLVGIALGLRQFIQQGLGIF), 73 to 95 (LGAKPMIITGMLMRALGFIFMGI), 99 to 116 (PWLLWVSCILSALGGTLF), 139 to 159 (LLMIQDSTCAMVGALLGSWLL), 165 to 185 (LVCLAGALLFLFAAILNAWLL), 213 to 233 (YVFTLTGYYILSVQVMLILPI), 243 to 263 (AAVRWTYAIEAALSLSLLYPI), 288 to 308 (IIPIGMIHNLQVLFLLIGIFY), 340 to 360 (LGLALGGAIGYSGGGWLYDMG), and 365 to 385 (IPQLPWVMLGMIGLITLLGFY).

The protein belongs to the major facilitator superfamily. DHA1 family. MdtH (TC 2.A.1.2.21) subfamily.

It is found in the cell membrane. The polypeptide is Multidrug resistance protein MdtH (Baumannia cicadellinicola subsp. Homalodisca coagulata).